An 86-amino-acid chain; its full sequence is Large ribosomal subunit protein bL31B (86 aa).

The protein belongs to the bacterial ribosomal protein bL31 family. Type B subfamily. Part of the 50S ribosomal subunit.

This chain is Large ribosomal subunit protein bL31B, found in Burkholderia lata (strain ATCC 17760 / DSM 23089 / LMG 22485 / NCIMB 9086 / R18194 / 383).